A 295-amino-acid chain; its full sequence is MYTGRFAPSPTGLLHIGSLLTAVASYADARSNGGKWLVRMEDLDPPREMPGAASHILHTLEAFGFKWDGEVTYQSRRYALYEETLYRLKTAGLVYPCHCNRKDWQAGARRGTDGFVYNGRCRHPGQRPALQGKQPSWRIRVPDRDIGFSDGIVGSYAQNLARDIGDFVLFRADGYWAYQLAVVADDAEQGVTHIVRGQDLLVSTPRQIYLQQCLGVPTPQYAHLPLLTNAQGQKWSKQTLAPALDLNRREQLLRQVFRYLKLPEAPETDRPAELLDWAVAHWDMDKVPKHAITAP.

L-glutamate-binding positions include Arg5–Ser9 and Glu41. Positions Pro8–Ser18 match the 'HIGH' region motif. Positions 97, 99, 117, and 121 each coordinate Zn(2+). L-glutamate contacts are provided by Tyr178 and Arg196. Positions Lys234 to Gln238 match the 'KMSKS' region motif. Lys237 contributes to the ATP binding site.

Belongs to the class-I aminoacyl-tRNA synthetase family. GluQ subfamily. It depends on Zn(2+) as a cofactor.

Catalyzes the tRNA-independent activation of glutamate in presence of ATP and the subsequent transfer of glutamate onto a tRNA(Asp). Glutamate is transferred on the 2-amino-5-(4,5-dihydroxy-2-cyclopenten-1-yl) moiety of the queuosine in the wobble position of the QUC anticodon. The polypeptide is Glutamyl-Q tRNA(Asp) synthetase (Neisseria gonorrhoeae (strain ATCC 700825 / FA 1090)).